The primary structure comprises 275 residues: Lacto-N-neotetraose biosynthesis glycosyltransferase LgtB (275 aa).

This sequence belongs to the glycosyltransferase 25 family.

The protein operates within glycan metabolism; lacto-N-neotetraose biosynthesis. It participates in bacterial outer membrane biogenesis; lipooligosaccharide biosynthesis. Its function is as follows. Adds the second galactose to the lacto-N-tetraose chain in lipooligosaccharide (LOS). This Neisseria meningitidis serogroup B (strain ATCC BAA-335 / MC58) protein is Lacto-N-neotetraose biosynthesis glycosyltransferase LgtB (lgtB).